A 348-amino-acid chain; its full sequence is Lipopolysaccharide heptosyltransferase 2 (348 aa).

The protein belongs to the glycosyltransferase 9 family.

The catalysed reaction is an L-alpha-D-Hep-(1-&gt;5)-[alpha-Kdo-(2-&gt;4)]-alpha-Kdo-(2-&gt;6)-lipid A + ADP-L-glycero-beta-D-manno-heptose = an L-alpha-D-Hep-(1-&gt;3)-L-alpha-D-Hep-(1-&gt;5)-[alpha-Kdo-(2-&gt;4)]-alpha-Kdo-(2-&gt;6)-lipid A + ADP + H(+). It functions in the pathway bacterial outer membrane biogenesis; LPS core biosynthesis. In terms of biological role, glycosyltransferase involved in the biosynthesis of the core oligosaccharide region of lipopolysaccharide (LPS). Catalyzes the addition of the second heptose unit to the heptosyl-Kdo2-lipid A module. This Salmonella typhimurium (strain LT2 / SGSC1412 / ATCC 700720) protein is Lipopolysaccharide heptosyltransferase 2.